The following is a 121-amino-acid chain: MDKTQSRLRRARQTRIKIAELQVARLAVHRTNTHIYAQVFSPCGTKVLASASTLEAEVRAQLADQTGKGGNVAAATLIGKRIAEKAKAAGIESVAFDRSGFRYHGRVKALADAAREAGLKF.

This sequence belongs to the universal ribosomal protein uL18 family. In terms of assembly, part of the 50S ribosomal subunit; part of the 5S rRNA/L5/L18/L25 subcomplex. Contacts the 5S and 23S rRNAs.

This is one of the proteins that bind and probably mediate the attachment of the 5S RNA into the large ribosomal subunit, where it forms part of the central protuberance. The sequence is that of Large ribosomal subunit protein uL18 from Paraburkholderia xenovorans (strain LB400).